Consider the following 74-residue polypeptide: U6-agatoxin-Ao1a (74 aa).

The first 19 residues, 1–19 (MRFYIAFFFLLLAADMALS), serve as a signal peptide directing secretion. The propeptide occupies 20 to 30 (FEIGNSEELER). Disulfide bonds link Cys44/Cys56, Cys49/Cys61, and Cys55/Cys72.

In terms of tissue distribution, expressed by the venom gland.

The protein resides in the secreted. This is U6-agatoxin-Ao1a from Agelena orientalis (Funnel-web spider).